The following is a 513-amino-acid chain: Histidine ammonia-lyase (513 aa).

A cross-link (5-imidazolinone (Ala-Gly)) is located at residues 142 to 144 (ASG). Serine 143 carries the 2,3-didehydroalanine (Ser) modification.

It belongs to the PAL/histidase family. Post-translationally, contains an active site 4-methylidene-imidazol-5-one (MIO), which is formed autocatalytically by cyclization and dehydration of residues Ala-Ser-Gly.

Its subcellular location is the cytoplasm. The catalysed reaction is L-histidine = trans-urocanate + NH4(+). It functions in the pathway amino-acid degradation; L-histidine degradation into L-glutamate; N-formimidoyl-L-glutamate from L-histidine: step 1/3. The polypeptide is Histidine ammonia-lyase (Mesorhizobium japonicum (strain LMG 29417 / CECT 9101 / MAFF 303099) (Mesorhizobium loti (strain MAFF 303099))).